A 964-amino-acid polypeptide reads, in one-letter code: MAAHLKKRVYEEFTKVVQQQQEEIATKKLRLTKPSKSAALHIDLCKATSPADALQYLLQFARKPVEAESVEGVVRILLEHYYKENDPSVRLKIASLLGLLSKTAGFSPDCIMDDAINILQNEKSHQVLAQLLDTLLAIGSKLPENQATQVRLVDVACKHLTDTSHGVRNKCLQLLGNLGSLEKSVTKDTEGSAARDVQKIIGDHFSDQDPRVRTAAIKAMLQLHERGLKLHQTIYNQACKLLSDDYEQVRSAAVQLIWVVSQLYPESIVPIPSSNEEIRLVDDAFGKICHMVSDGSWVVRVQAAKLLGSMEQVSSHFLEQTLDKKLMSDLRRKRTAHERAKELYSSGEFSSGRKWGDDAPKEEIDTGAVNLIESGACGAFVHGLEDEMYEVRIAAVEALCMLAQSSPSFAEKCLDFLVDMFNDEIEEVRLQSIHTMRKISNNITLREDQLDTVLAVLEDSSRDIREALHELLCCTNVSTKEGIHLALVELLKNLTKYPTDRDSIWKCLKFLGSRHPTLVLPLVPELLSTHPFFDTAEPDMDDPAYIAVLVLIFNAAKTCPTMPALFSDHTLRHYAYLRDSLSHLVPALRLPGRKLVSSTVPSNITPHEDPSQQFLQQSLERVYSVQHLDPQGAQELLEFTIRDLQRLGELQSELAGVADFSATYLQCQLLLIKALQEKLWNVAAPLYLKQSDLASAAAKQIMEETYKMEFMYSGVENKQVVIIQHMRLQAKALQLIVTARTTRGVDPLFGMCEKFLQEVDFFQRCFIADLPHLQDSFVDKLLDLMPRLMASKPVEVIKILQTMLRQSTFLHLPLPEQIHKASATIIEPAGESDNPLRFTSGLVVALDVDATLEHVQDPQNTVKVQVLYPDGQAQMIHPKPADFRNPGPGRHRLLTQVYLSHTAWTEPCQVEVRLLLAYNSGARIPKSPWLEGSEMSPQVETSIEGTIPFSKPVKVYIMPKPARR.

Lys-27 carries the N6-acetyllysine modification. HEAT repeat units follow at residues 67-106, 146-184, 191-229, 230-264, 278-314, 370-406, 407-445, and 447-485; these read AESV…TAGF, QATQ…LEKS, GSAA…RGLK, LHQT…SQLY, IRLV…EQVS, NLIE…AQSS, PSFA…NITL, and EDQL…GIHL. Lys-792 participates in a covalent cross-link: Glycyl lysine isopeptide (Lys-Gly) (interchain with G-Cter in SUMO1); alternate. Residue Lys-792 forms a Glycyl lysine isopeptide (Lys-Gly) (interchain with G-Cter in SUMO2); alternate linkage.

Belongs to the Integrator subunit 4 family. In terms of assembly, component of the Integrator complex, composed of core subunits INTS1, INTS2, INTS3, INTS4, INTS5, INTS6, INTS7, INTS8, INTS9/RC74, INTS10, INTS11/CPSF3L, INTS12, INTS13, INTS14 and INTS15. The core complex associates with protein phosphatase 2A subunits PPP2CA and PPP2R1A, to form the Integrator-PP2A (INTAC) complex. INTS4 is part of the RNA endonuclease subcomplex, composed of INTS4, INTS9, INTS11 and inositol hexakisphosphate (InsP6). Interacts with BRAT1; interaction is required for the assembly of the RNA endonuclease subcomplex.

The protein resides in the nucleus. It localises to the cytoplasm. In terms of biological role, component of the integrator complex, a multiprotein complex that terminates RNA polymerase II (Pol II) transcription in the promoter-proximal region of genes. The integrator complex provides a quality checkpoint during transcription elongation by driving premature transcription termination of transcripts that are unfavorably configured for transcriptional elongation: the complex terminates transcription by (1) catalyzing dephosphorylation of the C-terminal domain (CTD) of Pol II subunit POLR2A/RPB1 and SUPT5H/SPT5, (2) degrading the exiting nascent RNA transcript via endonuclease activity and (3) promoting the release of Pol II from bound DNA. The integrator complex is also involved in terminating the synthesis of non-coding Pol II transcripts, such as enhancer RNAs (eRNAs), small nuclear RNAs (snRNAs), telomerase RNAs and long non-coding RNAs (lncRNAs). Within the integrator complex, INTS4 acts as an scaffold that links INTS9 and INTS11. Mediates recruitment of cytoplasmic dynein to the nuclear envelope, probably as component of the integrator complex. The polypeptide is Integrator complex subunit 4 (Ints4) (Mus musculus (Mouse)).